The sequence spans 339 residues: ATPase GET3 (339 aa).

37-44 (KGGVGKTT) provides a ligand contact to ATP. Residue Asp-66 is part of the active site. Positions 237 and 264 each coordinate ATP. Zn(2+)-binding residues include Cys-275 and Cys-278.

Belongs to the arsA ATPase family. As to quaternary structure, homodimer.

Its subcellular location is the cytoplasm. The protein resides in the endoplasmic reticulum. In terms of biological role, ATPase required for the post-translational delivery of tail-anchored (TA) proteins to the endoplasmic reticulum. Recognizes and selectively binds the transmembrane domain of TA proteins in the cytosol. This complex then targets to the endoplasmic reticulum by membrane-bound receptors, where the tail-anchored protein is released for insertion. This process is regulated by ATP binding and hydrolysis. ATP binding drives the homodimer towards the closed dimer state, facilitating recognition of newly synthesized TA membrane proteins. ATP hydrolysis is required for insertion. Subsequently, the homodimer reverts towards the open dimer state, lowering its affinity for the membrane-bound receptor, and returning it to the cytosol to initiate a new round of targeting. In Rhodotorula glutinis (Yeast), this protein is ATPase GET3.